Reading from the N-terminus, the 504-residue chain is MFENIYIQQRIEKANKLREDGINPYSNESSRNCTISKYLNVNSDIFQLEEKRDENRNYTVAGRIKFFRLMGKASFLKIEDESGMLQIYVARDNLPENFYNEVFKKNIEVGDIIEISGYPFVTGHGELSLHADSLKILTKAISPLPEKFHGIQDKELRYRQRYLDLIMNSEVRKTFHIRSKVISLTRRFFENKGFLEVETPMMHPIAGGANAKPFVTHFNALGVDRFLRIAPELYLKRLIVGGFEAVFEINRNFRNEGMDATHNPEFTSIEFYWAYKTYKDLIVLTKEYFEYLFENLNLPTILPYGEFKIDFNKFSEIPLIQSLYEIGGVPQDIVEDKDKILAFLKANNLEANANLNLGQLQGELFDEFVEAKLINPTFITEYPVEISPLARRSDEKPHLTDRFELFIAGKEIANAFSELNDPIDQLQRFEGQIAAKEAGDDEAHEMDEDFVNALSYGMAPTAGQGIGIDRLVMMLTNEHSIRDVLLFPAMKPIKQEIDLYSEEK.

Residues glutamate 404 and glutamate 411 each contribute to the Mg(2+) site.

The protein belongs to the class-II aminoacyl-tRNA synthetase family. As to quaternary structure, homodimer. Requires Mg(2+) as cofactor.

The protein resides in the cytoplasm. It catalyses the reaction tRNA(Lys) + L-lysine + ATP = L-lysyl-tRNA(Lys) + AMP + diphosphate. The polypeptide is Lysine--tRNA ligase (Aliarcobacter butzleri (strain RM4018) (Arcobacter butzleri)).